Here is a 597-residue protein sequence, read N- to C-terminus: Apurinic-apyrimidinic endonuclease 1 (597 aa).

The segment covering 232–246 has biased composition (polar residues); the sequence is YNNDTKYLSNPKGVT. A disordered region spans residues 232 to 296; the sequence is YNNDTKYLSN…IPPIPKNTED (65 aa). Residues 265–274 are compositionally biased toward low complexity; that stretch reads NNNNNNNNNK. Zn(2+) contacts are provided by His-380, His-420, Glu-456, Asp-490, His-493, His-527, Asp-540, His-542, and Glu-572. His-493 lines the Mn(2+) pocket. 2 residues coordinate Mn(2+): Asp-540 and His-542.

Belongs to the AP endonuclease 2 family. It depends on Zn(2+) as a cofactor. Requires Mn(2+) as cofactor. May be proteolytically cleaved into a 59 kDa form.

The protein localises to the mitochondrion. Apurinic/apyrimidinic (AP) endonuclease activity is enhanced with increasing concentrations of Mn(2+), while Zn(2+) initially enhances activity but subsequently inhibits activity in a concentration-dependent manner. Co(2+) inhibits apurinic/apyrimidinic (AP) endonuclease activity at concentrations greater than 2.5 mM. Functionally, plays a role in mitochondrial DNA base excision repair (BER) pathway induced by oxidative stress. Has apurinic/apyrimidinic (AP) endonuclease activity towards double-stranded DNA (dsDNA) with a preference for C as opposite base. Has 3'-phosphatase activity; removes 3'-phosphate from blunt-end, recessed, and gapped DNA templates and thus, removes 3'-blocks for DNA polymerase activity during BER. Lacks 3'-5' exonuclease activity and does not cleave damaged bases by nucleotide incision repair (NIR). The chain is Apurinic-apyrimidinic endonuclease 1 from Plasmodium falciparum (isolate 3D7).